The chain runs to 297 residues: N-acetylmuramoyl-L-alanine amidase XlyA (297 aa).

A signal peptide spans 1-44 (MVNIIQDFIPVGANNRPGYAMTPLYITVHNTANTAVGADAAAHA). One can recognise an N-acetylmuramoyl-L-alanine amidase domain in the interval 45-140 (RYLKNPDTTT…KYWSGKECPR (96 aa)). The 45-residue stretch at 159–203 (QTYVVKQGDTLTSIARAFGVTVAQLQEWNNIEDPNLIRVGQVLIV) folds into the LysM domain.

The protein belongs to the N-acetylmuramoyl-L-alanine amidase 2 family.

It localises to the secreted. The enzyme catalyses Hydrolyzes the link between N-acetylmuramoyl residues and L-amino acid residues in certain cell-wall glycopeptides.. Its function is as follows. Autolysins are involved in some important biological processes such as cell separation, cell-wall turnover, competence for genetic transformation, formation of the flagella and sporulation. The sequence is that of N-acetylmuramoyl-L-alanine amidase XlyA (xlyA) from Bacillus subtilis (strain 168).